The sequence spans 194 residues: dCTP deaminase (194 aa).

DCTP is bound by residues Arg110–Arg115, Asp128, Val136–Glu138, Tyr171, Lys178, and Gln182. Glu138 serves as the catalytic Proton donor/acceptor.

Belongs to the dCTP deaminase family. In terms of assembly, homotrimer.

It carries out the reaction dCTP + H2O + H(+) = dUTP + NH4(+). Its pathway is pyrimidine metabolism; dUMP biosynthesis; dUMP from dCTP (dUTP route): step 1/2. Its function is as follows. Catalyzes the deamination of dCTP to dUTP. The sequence is that of dCTP deaminase from Pseudoalteromonas translucida (strain TAC 125).